Here is a 465-residue protein sequence, read N- to C-terminus: A-type ATP synthase subunit B (465 aa).

The protein belongs to the ATPase alpha/beta chains family. As to quaternary structure, has multiple subunits with at least A(3), B(3), C, D, E, F, H, I and proteolipid K(x).

It localises to the cell membrane. Component of the A-type ATP synthase that produces ATP from ADP in the presence of a proton gradient across the membrane. The B chain is a regulatory subunit. This is A-type ATP synthase subunit B from Sulfurisphaera tokodaii (strain DSM 16993 / JCM 10545 / NBRC 100140 / 7) (Sulfolobus tokodaii).